A 407-amino-acid chain; its full sequence is MLRYPYFCRMYKECLSCWLESGIPNLGVWPNRIHTTAEKYREYEAREQTDQTQAQELHRSQDRDFETMAKLHIPVMVDEVVHCLSPQKGQIFLDMTFGSGGHTKAILQKESDIVLYALDRDPTAYALAEHLSELYPKQIRAMLGQFSQAEALLMKAGVQPGTFDGVLMDLGCSSMQLDTPERGFSLRKDGPLDMRMDGGRYPDMPTAADVVNALDQQALASILRTYGEEKHAKKIASAIVQARSIYPITRTQQLASIVAGAFPPSAIYTRKDLLQRSTHIATKTFQALRIFVNNELNELYTGLKTAQKFLRPGGRLVALSFHSLEDRIVKRFLLGISMTERFNLSVRQQVMKTSQLGSDHENTEEVSMRRAPLMWELIHKKVLSPQDQDVQDNPRGRSAKLRAAIKL.

S-adenosyl-L-methionine is bound by residues 100 to 102, aspartate 119, phenylalanine 146, aspartate 169, and glutamine 176; that span reads GGH. Serine 358 carries the post-translational modification Phosphoserine.

This sequence belongs to the methyltransferase superfamily. RsmH family.

Its subcellular location is the mitochondrion matrix. It carries out the reaction cytidine(839) in 12S rRNA + S-adenosyl-L-methionine = N(4)-methylcytidine(839) in 12S rRNA + S-adenosyl-L-homocysteine + H(+). Functionally, N4-methylcytidine (m4C) methyltransferase responsible for the methylation of position C839 in mitochondrial 12S rRNA. Involved in the stabilization of 12S rRNA folding, therefore facilitating the assembly of the mitochondrial small ribosomal subunits. This is 12S rRNA N(4)-cytidine methyltransferase METTL15 from Homo sapiens (Human).